A 429-amino-acid polypeptide reads, in one-letter code: Keratin, type I cytoskeletal 47 kDa (429 aa).

The segment covering 1–16 (MTSYRSSSASYYSGSS) has biased composition (low complexity). The disordered stretch occupies residues 1-20 (MTSYRSSSASYYSGSSSKGG). The interval 1-69 (MTSYRSSSAS…EAASSSFGGN (69 aa)) is head. Positions 70-105 (EKHAMQNLNDRLASYLEKVRALEATNSDLEGKIRNW) are coil 1A. In terms of domain architecture, IF rod spans 70-385 (EKHAMQNLND…RLLEGELGQV (316 aa)). The linker 1 stretch occupies residues 106-127 (YDKQSDAGIGAGSKDYSKYFEI). The interval 128 to 219 (IAELRNKIRA…KNHEEEMSHA (92 aa)) is coil 1B. Residues 220-242 (KSQSAGKVSVEMDAALGVDLTSI) form a linker 12 region. Positions 243–381 (LNNMRADYEI…QTYRRLLEGE (139 aa)) are coil 2. The tail stretch occupies residues 382 to 429 (LGQVTTVANTSSVESKTESSSTSTTRTRMVKTIVEEVVDGKVVSSRVE). The segment at 389-408 (ANTSSVESKTESSSTSTTRT) is disordered. Low complexity predominate over residues 391–408 (TSSVESKTESSSTSTTRT).

It belongs to the intermediate filament family. In terms of assembly, heterotetramer of two type I and two type II keratins.

This chain is Keratin, type I cytoskeletal 47 kDa (xk81a1), found in Xenopus laevis (African clawed frog).